Here is a 146-residue protein sequence, read N- to C-terminus: Flavodoxin (146 aa).

The 140-residue stretch at 4-143 (ALIVYGSTTG…EVLDWAREVL (140 aa)) folds into the Flavodoxin-like domain.

Belongs to the flavodoxin family. Requires FMN as cofactor.

Electron-transfer proteins that function in various electron transport systems in microorganisms. Functionally interchangeable with ferredoxin. In Megalodesulfovibrio gigas (strain ATCC 19364 / DSM 1382 / NCIMB 9332 / VKM B-1759) (Desulfovibrio gigas), this protein is Flavodoxin.